We begin with the raw amino-acid sequence, 117 residues long: Immunoglobulin heavy variable 1-84 (117 aa).

An N-terminal signal peptide occupies residues 1–19 (MGWSWIFLFLLSGTAGVHC). The framework-1 stretch occupies residues 20-49 (QIQLQQSGPELVKPGASVKISCKASGYTFT). An Ig-like domain is found at 31 to 117 (VKPGASVKIS…EDSAVYFCAR (87 aa)). Residues Cys41 and Cys115 are joined by a disulfide bond. Positions 50–54 (DYYIN) are complementarity-determining-1. Positions 55-68 (WVKQRPGQGLEWIG) are framework-2. Residues 69 to 85 (WIYPGSGNTKYNEKFKG) form a complementarity-determining-2 region. The tract at residues 86-117 (KATLTVDTSSSTAYMQLSSLTSEDSAVYFCAR) is framework-3.

The chain is Immunoglobulin heavy variable 1-84 from Mus musculus (Mouse).